We begin with the raw amino-acid sequence, 637 residues long: Pentatricopeptide repeat-containing protein At1g12300, mitochondrial (637 aa).

Residues Met1–Phe95 constitute a mitochondrion transit peptide. 15 PPR repeats span residues Thr87–His121, Asn122–Pro156, Asn157–Pro191, Asp192–Pro226, Asn227–Leu261, Asp262–Thr296, Asn297–Pro331, Asn332–Pro366, Asp367–Pro401, Asn402–Ala436, Asp437–Pro471, Asn472–Leu506, Asp507–Pro541, Gly542–Pro576, and Asp577–Val611.

The protein belongs to the PPR family. P subfamily.

The protein localises to the mitochondrion. This Arabidopsis thaliana (Mouse-ear cress) protein is Pentatricopeptide repeat-containing protein At1g12300, mitochondrial.